Reading from the N-terminus, the 370-residue chain is Peptidoglycan glycosyltransferase MrdB (370 aa).

Transmembrane regions (helical) follow at residues 20–40, 50–70, 75–95, 136–156, 160–180, 183–203, 263–283, 312–332, and 336–356; these read MLLI…SASG, IGQI…PPRV, APYL…FGAI, SLKN…LVAA, LGTS…SGLS, LIGV…FFLM, FIFA…LLAL, LILF…LPVV, and LPLV…FGIV.

It belongs to the SEDS family. MrdB/RodA subfamily.

Its subcellular location is the cell inner membrane. The enzyme catalyses [GlcNAc-(1-&gt;4)-Mur2Ac(oyl-L-Ala-gamma-D-Glu-L-Lys-D-Ala-D-Ala)](n)-di-trans,octa-cis-undecaprenyl diphosphate + beta-D-GlcNAc-(1-&gt;4)-Mur2Ac(oyl-L-Ala-gamma-D-Glu-L-Lys-D-Ala-D-Ala)-di-trans,octa-cis-undecaprenyl diphosphate = [GlcNAc-(1-&gt;4)-Mur2Ac(oyl-L-Ala-gamma-D-Glu-L-Lys-D-Ala-D-Ala)](n+1)-di-trans,octa-cis-undecaprenyl diphosphate + di-trans,octa-cis-undecaprenyl diphosphate + H(+). It functions in the pathway cell wall biogenesis; peptidoglycan biosynthesis. In terms of biological role, peptidoglycan polymerase that is essential for cell wall elongation. In Escherichia coli O157:H7, this protein is Peptidoglycan glycosyltransferase MrdB.